The primary structure comprises 1205 residues: A disintegrin and metalloproteinase with thrombospondin motifs 3 (1205 aa).

Residues 1–20 (MVLLSLWLIAAALVEVRTSA) form the signal peptide. The propeptide occupies 21–249 (DGQAGNEEMV…QLNETMRRRR (229 aa)). 4 N-linked (GlcNAc...) asparagine glycosylation sites follow: asparagine 83, asparagine 119, asparagine 242, and asparagine 345. A Peptidase M12B domain is found at 256 to 460 (YNIEVLLGVD…HSYDCLLDDP (205 aa)). 3 disulfides stabilise this stretch: cysteine 333/cysteine 382, cysteine 376/cysteine 455, and cysteine 415/cysteine 441. Histidine 398 is a Zn(2+) binding site. Glutamate 399 is an active-site residue. The Zn(2+) site is built by histidine 402 and histidine 408. In terms of domain architecture, Disintegrin spans 470 to 550 (ELPGINYSMD…MWKNANQQKQ (81 aa)). N-linked (GlcNAc...) asparagine glycosylation is present at asparagine 475. 7 disulfides stabilise this stretch: cysteine 482–cysteine 507, cysteine 493–cysteine 516, cysteine 502–cysteine 535, cysteine 529–cysteine 540, cysteine 563–cysteine 600, cysteine 567–cysteine 605, and cysteine 578–cysteine 590. The TSP type-1 1 domain maps to 551-606 (DGNWGSWTKFGSCSRTCGTGVRFRTRQCNNPMPINGGQDCPGVNFEYQLCNTEECQ). The tract at residues 713–844 (RTVKGTFTRT…NSNNVIQEEL (132 aa)) is spacer. Asparagine 814 carries N-linked (GlcNAc...) asparagine glycosylation. 3 TSP type-1 domains span residues 845–905 (DTFE…QECT), 906–965 (HPLW…NRVP), and 966–1014 (CPAQ…QLPP). The N-linked (GlcNAc...) asparagine glycan is linked to asparagine 942. Cystine bridges form between cysteine 978–cysteine 1010, cysteine 982–cysteine 1015, and cysteine 993–cysteine 999. The PLAC domain occupies 1015–1054 (CNDEPCLGDKSIFCQMEVLARYCSIPGYNKLCCESCSKRS). Residues 1174–1205 (DSIGASSQARTSKKDGKIIDNRRPTRSSTLER) form a disordered region. A compositionally biased stretch (basic and acidic residues) spans 1185–1205 (SKKDGKIIDNRRPTRSSTLER).

Requires Zn(2+) as cofactor. Post-translationally, the precursor is cleaved by a furin endopeptidase. In terms of processing, glycosylated. Can be O-fucosylated by POFUT2 on a serine or a threonine residue found within the consensus sequence C1-X(2)-(S/T)-C2-G of the TSP type-1 repeat domains where C1 and C2 are the first and second cysteine residue of the repeat, respectively. Fucosylated repeats can then be further glycosylated by the addition of a beta-1,3-glucose residue by the glucosyltransferase, B3GALTL. Fucosylation mediates the efficient secretion of ADAMTS family members. Can also be C-glycosylated with one or two mannose molecules on tryptophan residues within the consensus sequence W-X-X-W of the TPRs, and N-glycosylated. These other glycosylations can also facilitate secretion. As to expression, found in cartilage and skin.

The protein resides in the secreted. The protein localises to the extracellular space. It localises to the extracellular matrix. In terms of biological role, cleaves the propeptides of type II collagen prior to fibril assembly. Does not act on types I and III collagens. This chain is A disintegrin and metalloproteinase with thrombospondin motifs 3 (ADAMTS3), found in Homo sapiens (Human).